We begin with the raw amino-acid sequence, 109 residues long: Hainantoxin-XVIII-7 (109 aa).

Positions 1 to 18 (MKLSIIIIATSLVIAVVA) are cleaved as a signal peptide. Positions 19 to 46 (FPSKDSKAIENDKTEQRMEIVVQETARA) are excised as a propeptide. 4 disulfides stabilise this stretch: C47-C62, C55-C68, C59-C108, and C61-C81.

The protein belongs to the neurotoxin 25 family. F7 subfamily. In terms of tissue distribution, expressed by the venom gland.

The protein resides in the secreted. In terms of biological role, putative ion channel inhibitor. This is Hainantoxin-XVIII-7 from Cyriopagopus hainanus (Chinese bird spider).